A 757-amino-acid chain; its full sequence is Protein ALTERED SEED GERMINATION 2 (757 aa).

WD repeat units lie at residues 6–43 (FHDG…LSQE), 48–87 (GHQG…LLHS), 91–132 (GHTA…GRAE), 145–185 (CHTR…SCPP), 213–253 (KQTL…PLAS), and 277–316 (RTNL…CSTG). Positions 245–257 (RRMLPPLASSRKR) match the Nuclear localization signal motif. The TPR repeat unit spans residues 442–475 (FKAHYYMSEALQQLGKCKEALDFATAAQHMNPSD). A disordered region spans residues 519-601 (ANSDSSHDMS…SSSQNDRTSY (83 aa)). The span at 523-532 (SSHDMSRSER) shows a compositional bias: basic and acidic residues. Positions 533–543 (EDSDYDEELEL) are enriched in acidic residues. Over residues 582-601 (TVDNASSGTASSSQNDRTSY) the composition is skewed to polar residues. WD repeat units follow at residues 618–658 (NVGT…LMKV) and 661–700 (GDES…PSIV). Residue Cys754 is the site of S-12-hydroxyfarnesyl cysteine; by FTB/ERA1 attachment.

In terms of assembly, interacts with DDB1; the subcellular localization of this complex depends on farnesylation status. Binds to HDA9 in the cytosol when farnesylated. In terms of processing, farnesylated at Cys-754 by FTB/ERA1; this modification triggers an exclusion from the nucleus.

It is found in the nucleus. The protein resides in the cytoplasm. It localises to the cytosol. It functions in the pathway protein modification; protein ubiquitination. May function as a substrate adapter for CUL4-DDB1 E3 ubiquitin-protein ligase complex. Negative regulator of fatty acid biosynthetic process and accumulation. Acts as an abscisic acid (ABA) negative regulator. Involved in responses to salt (NaCl) and osmotic (e.g. in response to mannitol and PEG) stresses. This Arabidopsis thaliana (Mouse-ear cress) protein is Protein ALTERED SEED GERMINATION 2.